The primary structure comprises 298 residues: Acetyl-coenzyme A carboxylase carboxyl transferase subunit beta (298 aa).

Positions 25-295 constitute a CoA carboxyltransferase N-terminal domain; sequence VWAKCANCGE…SADHREHVVA (271 aa). 4 residues coordinate Zn(2+): Cys-29, Cys-32, Cys-48, and Cys-51. The segment at 29–51 adopts a C4-type zinc-finger fold; that stretch reads CANCGELTYQKQFNDALKVCPKC.

The protein belongs to the AccD/PCCB family. Acetyl-CoA carboxylase is a heterohexamer composed of biotin carboxyl carrier protein (AccB), biotin carboxylase (AccC) and two subunits each of ACCase subunit alpha (AccA) and ACCase subunit beta (AccD). The cofactor is Zn(2+).

The protein localises to the cytoplasm. It catalyses the reaction N(6)-carboxybiotinyl-L-lysyl-[protein] + acetyl-CoA = N(6)-biotinyl-L-lysyl-[protein] + malonyl-CoA. Its pathway is lipid metabolism; malonyl-CoA biosynthesis; malonyl-CoA from acetyl-CoA: step 1/1. In terms of biological role, component of the acetyl coenzyme A carboxylase (ACC) complex. Biotin carboxylase (BC) catalyzes the carboxylation of biotin on its carrier protein (BCCP) and then the CO(2) group is transferred by the transcarboxylase to acetyl-CoA to form malonyl-CoA. The protein is Acetyl-coenzyme A carboxylase carboxyl transferase subunit beta of Herpetosiphon aurantiacus (strain ATCC 23779 / DSM 785 / 114-95).